We begin with the raw amino-acid sequence, 256 residues long: Transcription factor BHLH094 (256 aa).

The disordered stretch occupies residues 1-125; that stretch reads MDPAPSLAAE…TPPEPPKQDY (125 aa). Over residues 79–97 the composition is skewed to basic and acidic residues; the sequence is PEAKRLKPMKSSDKNDSLR. Residues 134 to 147 form a basic motif; degenerate region; sequence QATDSHSLAERARR. A bHLH domain is found at 134-184; that stretch reads QATDSHSLAERARREKISERMKILQDLVPGCNKVIGKASVLDEIINYIQSL. The tract at residues 148–184 is helix-loop-helix motif; it reads EKISERMKILQDLVPGCNKVIGKASVLDEIINYIQSL.

It belongs to the bHLH protein family. As to quaternary structure, interacts with RSS3. Forms a ternary complex with RSS3 and TIFY11A/JAZ9 in the nucleus.

The protein resides in the nucleus. Its function is as follows. Transcription factor that forms a ternary complex with RSS3 and TIFY11A/JAZ9 to negatively regulate jasmonate-responsive genes. The polypeptide is Transcription factor BHLH094 (Oryza sativa subsp. japonica (Rice)).